Here is a 251-residue protein sequence, read N- to C-terminus: Flap endonuclease Xni (251 aa).

Asp-104 is a binding site for Mg(2+). The region spanning 160 to 249 is the 5'-3' exonuclease domain; sequence VQPQQLPDYW…IDGNLQQLRL (90 aa). 5 residues coordinate K(+): Leu-171, Ala-172, Pro-180, Val-182, and Ile-185. Residues 184-189 are interaction with DNA; that stretch reads GIGPKS.

It belongs to the Xni family. The cofactor is Mg(2+). Requires K(+) as cofactor.

In terms of biological role, has flap endonuclease activity. During DNA replication, flap endonucleases cleave the 5'-overhanging flap structure that is generated by displacement synthesis when DNA polymerase encounters the 5'-end of a downstream Okazaki fragment. In Escherichia coli O7:K1 (strain IAI39 / ExPEC), this protein is Flap endonuclease Xni.